The following is a 776-amino-acid chain: Protein SEY1 (776 aa).

At Met1–His681 the chain is on the cytoplasmic side. The GB1/RHD3-type G domain maps to Gly34–Tyr263. Position 44 to 51 (Gly44 to Ser51) interacts with GTP. Residues Ile682 to Ile702 traverse the membrane as a helical segment. Topologically, residues Arg703–Pro705 are lumenal. The helical transmembrane segment at Leu706–Leu726 threads the bilayer. Topologically, residues Trp727–Lys776 are cytoplasmic.

The protein belongs to the TRAFAC class dynamin-like GTPase superfamily. GB1/RHD3 GTPase family. RHD3 subfamily. In terms of assembly, interacts with RTN1 and YOP1; GTP binding is not required for these interactions.

The protein resides in the endoplasmic reticulum membrane. Its function is as follows. Cooperates with the reticulon proteins RTN1 and RTN2 and the tubule-shaping DP1 family protein YOP1 to generate and maintain the structure of the tubular endoplasmic reticulum network. Has GTPase activity, which is required for its function in ER organization. The protein is Protein SEY1 of Saccharomyces cerevisiae (strain RM11-1a) (Baker's yeast).